A 275-amino-acid chain; its full sequence is Bis(5'-nucleosyl)-tetraphosphatase, symmetrical (275 aa).

Belongs to the Ap4A hydrolase family.

It catalyses the reaction P(1),P(4)-bis(5'-adenosyl) tetraphosphate + H2O = 2 ADP + 2 H(+). Hydrolyzes diadenosine 5',5'''-P1,P4-tetraphosphate to yield ADP. The chain is Bis(5'-nucleosyl)-tetraphosphatase, symmetrical from Marinomonas sp. (strain MWYL1).